A 450-amino-acid polypeptide reads, in one-letter code: tRNA modification GTPase MnmE (450 aa).

Residues Arg23, Glu80, and Arg123 each coordinate (6S)-5-formyl-5,6,7,8-tetrahydrofolate. In terms of domain architecture, TrmE-type G spans 219-372 (GLHVVLAGQP…LRARLLQMAG (154 aa)). Asn229 serves as a coordination point for K(+). GTP-binding positions include 229–234 (NVGKSS), 248–254 (TPIAGTT), and 273–276 (DTAG). Ser233 is a Mg(2+) binding site. Positions 248, 250, and 253 each coordinate K(+). Thr254 provides a ligand contact to Mg(2+). Residue Lys450 coordinates (6S)-5-formyl-5,6,7,8-tetrahydrofolate.

It belongs to the TRAFAC class TrmE-Era-EngA-EngB-Septin-like GTPase superfamily. TrmE GTPase family. Homodimer. Heterotetramer of two MnmE and two MnmG subunits. The cofactor is K(+).

The protein resides in the cytoplasm. Its function is as follows. Exhibits a very high intrinsic GTPase hydrolysis rate. Involved in the addition of a carboxymethylaminomethyl (cmnm) group at the wobble position (U34) of certain tRNAs, forming tRNA-cmnm(5)s(2)U34. The sequence is that of tRNA modification GTPase MnmE from Bordetella avium (strain 197N).